The sequence spans 387 residues: EP300-interacting inhibitor of differentiation 3 (387 aa).

The segment covering 1–19 (MSEEKCSLTGGEEKGEELA) has biased composition (basic and acidic residues). The tract at residues 1–77 (MSEEKCSLTG…SDDLSPEAPC (77 aa)) is disordered. Residues 32 to 72 (EEDDDDDEEALKKEEEEEEEEEEEDEEEEEEGPDSSSDDLS) are compositionally biased toward acidic residues.

The protein belongs to the NSE4 family. Component of the SMC5-SMC6 complex which consists at least of SMC5, SMC6, NSMCE2, NSMCE1, NSMCE4A or EID3 and NSMCE3. NSMCE1, NSMCE4A or EID3 and NSMCE3 probably form a subcomplex that bridges the head domains of the SMC5:SMC6 heterodimer. Homodimer, and heterodimer with EID2. Interacts with the C-terminal region of CREBBP.

The protein resides in the nucleus. The protein localises to the cytoplasm. It localises to the chromosome. Its subcellular location is the telomere. Functionally, tissue-specific component of the SMC5-SMC6 complex, a complex involved in repair of DNA double-strand breaks by homologous recombination. The complex may promote sister chromatid homologous recombination by recruiting the SMC1-SMC3 cohesin complex to double-strand breaks. The complex is required for telomere maintenance via recombination and mediates sumoylation of shelterin complex (telosome) components. In terms of biological role, acts as a repressor of nuclear receptor-dependent transcription possibly by interfering with CREBBP-dependent coactivation. May function as a coinhibitor of other CREBBP/EP300-dependent transcription factors. The protein is EP300-interacting inhibitor of differentiation 3 of Rattus norvegicus (Rat).